Here is a 208-residue protein sequence, read N- to C-terminus: FMN-dependent NADH:quinone oxidoreductase 1 (208 aa).

It belongs to the azoreductase type 1 family. In terms of assembly, homodimer. Requires FMN as cofactor.

It catalyses the reaction 2 a quinone + NADH + H(+) = 2 a 1,4-benzosemiquinone + NAD(+). The catalysed reaction is N,N-dimethyl-1,4-phenylenediamine + anthranilate + 2 NAD(+) = 2-(4-dimethylaminophenyl)diazenylbenzoate + 2 NADH + 2 H(+). Quinone reductase that provides resistance to thiol-specific stress caused by electrophilic quinones. In terms of biological role, also exhibits azoreductase activity. Catalyzes the reductive cleavage of the azo bond in aromatic azo compounds to the corresponding amines. This is FMN-dependent NADH:quinone oxidoreductase 1 from Bacillus thuringiensis subsp. konkukian (strain 97-27).